We begin with the raw amino-acid sequence, 343 residues long: 3-dehydroquinate synthase (343 aa).

NAD(+) is bound by residues 86–90, 110–111, lysine 123, and lysine 132; these read GALLD and TT. Residues glutamate 165, histidine 229, and histidine 243 each contribute to the Zn(2+) site.

Belongs to the sugar phosphate cyclases superfamily. Dehydroquinate synthase family. The cofactor is Co(2+). Requires Zn(2+) as cofactor. NAD(+) is required as a cofactor.

The protein localises to the cytoplasm. It catalyses the reaction 7-phospho-2-dehydro-3-deoxy-D-arabino-heptonate = 3-dehydroquinate + phosphate. The protein operates within metabolic intermediate biosynthesis; chorismate biosynthesis; chorismate from D-erythrose 4-phosphate and phosphoenolpyruvate: step 2/7. Catalyzes the conversion of 3-deoxy-D-arabino-heptulosonate 7-phosphate (DAHP) to dehydroquinate (DHQ). This is 3-dehydroquinate synthase from Pyrobaculum neutrophilum (strain DSM 2338 / JCM 9278 / NBRC 100436 / V24Sta) (Thermoproteus neutrophilus).